Here is a 254-residue protein sequence, read N- to C-terminus: Alcohol dehydrogenase (254 aa).

Residue 10–33 (FVAGLGGIGLDTSREIVKSGPKNL) participates in NAD(+) binding. Ser-138 is a binding site for substrate. Residue Tyr-151 is the Proton acceptor of the active site.

The protein belongs to the short-chain dehydrogenases/reductases (SDR) family. As to quaternary structure, homodimer.

It carries out the reaction a primary alcohol + NAD(+) = an aldehyde + NADH + H(+). The catalysed reaction is a secondary alcohol + NAD(+) = a ketone + NADH + H(+). In Drosophila heteroneura (Fruit fly), this protein is Alcohol dehydrogenase (Adh).